The chain runs to 268 residues: Mediator of RNA polymerase II transcription subunit 8 (268 aa).

A coiled-coil region spans residues 1 to 28 (MQREEKQLEASLDALLSQVADLKNSLGS). Residue S82 is modified to Phosphoserine. Residues 133–163 (ADAAQKQIQSLNKMCSNLLEKISKEERESES) are a coiled coil. The tract at residues 142–151 (SLNKMCSNLL) is interaction with the Elongin BC complex. Disordered regions lie at residues 156-176 (KEERESESGGLRPNKQTFNPT) and 193-268 (NWRP…PYQR). The segment covering 200–209 (SGPGQAGQPG) has biased composition (gly residues). A compositionally biased stretch (polar residues) spans 218 to 235 (SGLQQVQMAGAPSQQQPM).

Belongs to the Mediator complex subunit 8 family. In terms of assembly, component of the Mediator complex, which is composed of MED1, MED4, MED6, MED7, MED8, MED9, MED10, MED11, MED12, MED13, MED13L, MED14, MED15, MED16, MED17, MED18, MED19, MED20, MED21, MED22, MED23, MED24, MED25, MED26, MED27, MED29, MED30, MED31, CCNC, CDK8 and CDC2L6/CDK11. The MED12, MED13, CCNC and CDK8 subunits form a distinct module termed the CDK8 module. Mediator containing the CDK8 module is less active than Mediator lacking this module in supporting transcriptional activation. Individual preparations of the Mediator complex lacking one or more distinct subunits have been variously termed ARC, CRSP, DRIP, PC2, SMCC and TRAP. May be part of a multisubunit E3 ubiquitin-protein ligase complex with the elongin BC complex (ELOB and ELOC), CUL2 and RBX1.

It localises to the nucleus. Its pathway is protein modification; protein ubiquitination. In terms of biological role, component of the Mediator complex, a coactivator involved in the regulated transcription of nearly all RNA polymerase II-dependent genes. Mediator functions as a bridge to convey information from gene-specific regulatory proteins to the basal RNA polymerase II transcription machinery. Mediator is recruited to promoters by direct interactions with regulatory proteins and serves as a scaffold for the assembly of a functional preinitiation complex with RNA polymerase II and the general transcription factors. May play a role as a target recruitment subunit in E3 ubiquitin-protein ligase complexes and thus in ubiquitination and subsequent proteasomal degradation of target proteins. The protein is Mediator of RNA polymerase II transcription subunit 8 (MED8) of Homo sapiens (Human).